The primary structure comprises 371 residues: Phospho-N-acetylmuramoyl-pentapeptide-transferase (371 aa).

9 helical membrane-spanning segments follow: residues threonine 25 to alanine 45, methionine 77 to alanine 94, isoleucine 136 to serine 156, leucine 172 to phenylalanine 192, glycine 204 to alanine 224, glycine 240 to tryptophan 260, phenylalanine 269 to isoleucine 289, valine 296 to phenylalanine 316, and lysine 348 to leucine 368.

It belongs to the glycosyltransferase 4 family. MraY subfamily. It depends on Mg(2+) as a cofactor.

It localises to the cell inner membrane. The catalysed reaction is UDP-N-acetyl-alpha-D-muramoyl-L-alanyl-gamma-D-glutamyl-meso-2,6-diaminopimeloyl-D-alanyl-D-alanine + di-trans,octa-cis-undecaprenyl phosphate = di-trans,octa-cis-undecaprenyl diphospho-N-acetyl-alpha-D-muramoyl-L-alanyl-D-glutamyl-meso-2,6-diaminopimeloyl-D-alanyl-D-alanine + UMP. It functions in the pathway cell wall biogenesis; peptidoglycan biosynthesis. Functionally, catalyzes the initial step of the lipid cycle reactions in the biosynthesis of the cell wall peptidoglycan: transfers peptidoglycan precursor phospho-MurNAc-pentapeptide from UDP-MurNAc-pentapeptide onto the lipid carrier undecaprenyl phosphate, yielding undecaprenyl-pyrophosphoryl-MurNAc-pentapeptide, known as lipid I. This chain is Phospho-N-acetylmuramoyl-pentapeptide-transferase, found in Opitutus terrae (strain DSM 11246 / JCM 15787 / PB90-1).